The chain runs to 313 residues: Ribosomal RNA small subunit methyltransferase H (313 aa).

S-adenosyl-L-methionine is bound by residues 35 to 37 (GGH), aspartate 55, phenylalanine 79, aspartate 100, and glutamine 107.

It belongs to the methyltransferase superfamily. RsmH family.

The protein resides in the cytoplasm. The catalysed reaction is cytidine(1402) in 16S rRNA + S-adenosyl-L-methionine = N(4)-methylcytidine(1402) in 16S rRNA + S-adenosyl-L-homocysteine + H(+). In terms of biological role, specifically methylates the N4 position of cytidine in position 1402 (C1402) of 16S rRNA. The chain is Ribosomal RNA small subunit methyltransferase H from Burkholderia thailandensis (strain ATCC 700388 / DSM 13276 / CCUG 48851 / CIP 106301 / E264).